The following is a 113-amino-acid chain: Large ribosomal subunit protein bL19 (113 aa).

It belongs to the bacterial ribosomal protein bL19 family.

Its function is as follows. This protein is located at the 30S-50S ribosomal subunit interface and may play a role in the structure and function of the aminoacyl-tRNA binding site. This chain is Large ribosomal subunit protein bL19, found in Moorella thermoacetica (strain ATCC 39073 / JCM 9320).